Here is a 232-residue protein sequence, read N- to C-terminus: Large ribosomal subunit protein uL1 (232 aa).

Belongs to the universal ribosomal protein uL1 family. Part of the 50S ribosomal subunit.

In terms of biological role, binds directly to 23S rRNA. The L1 stalk is quite mobile in the ribosome, and is involved in E site tRNA release. Its function is as follows. Protein L1 is also a translational repressor protein, it controls the translation of the L11 operon by binding to its mRNA. The polypeptide is Large ribosomal subunit protein uL1 (Burkholderia lata (strain ATCC 17760 / DSM 23089 / LMG 22485 / NCIMB 9086 / R18194 / 383)).